The chain runs to 438 residues: MLRFAPSPTGDMHTGNLRAAIFNYILAKQRGEKFLVRIEDTDMERNIEGKDKEILSLLNLFGMVWDELVYQSHNFPRHAQMAEYLLSQGRAFYCYCSKEFLDQKREEALAQKLPFRYHDAWAEIEKDSTQKPVIRLRGASEEICFKDEIKGIVSFKPHEVDSFVIVREDGIPTYNFACAIDDMLYDVSFIVRGEDHVSNTPKQMLIQRGVGYEKLLQYAHLPILLNEEGKKMSKRDNASSVKWLLEEGYLPQAIANYLILMGNKTPTEVFALKEAIEWFDITHVAKAPAKFDLDKLRFLNREHFKRLSEQDLAFLLDHKDPSVGGLAKLYLQESSTLNELRPKIDALFAPKIAQGEFASAMILLYPHLRAMIEEFSPALKDFEAFKKEAMERSGLKGKPFFKSLRLLLTGSENGPELSDLFEYARFFFNDIIRLKEPS.

A 'HIGH' region motif is present at residues 6–16 (PSPTGDMHTGN). The 'KMSKS' region signature appears at 231 to 235 (KMSKR). Residue Lys-234 coordinates ATP.

It belongs to the class-I aminoacyl-tRNA synthetase family. Glutamate--tRNA ligase type 1 subfamily. As to quaternary structure, monomer.

Its subcellular location is the cytoplasm. The enzyme catalyses tRNA(Glu) + L-glutamate + ATP = L-glutamyl-tRNA(Glu) + AMP + diphosphate. Its function is as follows. Catalyzes the attachment of glutamate to tRNA(Glu) in a two-step reaction: glutamate is first activated by ATP to form Glu-AMP and then transferred to the acceptor end of tRNA(Glu). This chain is Glutamate--tRNA ligase 2, found in Wolinella succinogenes (strain ATCC 29543 / DSM 1740 / CCUG 13145 / JCM 31913 / LMG 7466 / NCTC 11488 / FDC 602W) (Vibrio succinogenes).